A 385-amino-acid polypeptide reads, in one-letter code: Probable tRNA sulfurtransferase (385 aa).

One can recognise a THUMP domain in the interval 57–161; the sequence is NESIKRLSNV…NKNAYVWSNK (105 aa). ATP is bound by residues 181–182, 206–207, Arg-263, Gly-285, and Gln-294; these read ML and YY.

Belongs to the ThiI family.

It localises to the cytoplasm. It carries out the reaction [ThiI sulfur-carrier protein]-S-sulfanyl-L-cysteine + a uridine in tRNA + 2 reduced [2Fe-2S]-[ferredoxin] + ATP + H(+) = [ThiI sulfur-carrier protein]-L-cysteine + a 4-thiouridine in tRNA + 2 oxidized [2Fe-2S]-[ferredoxin] + AMP + diphosphate. The catalysed reaction is [ThiS sulfur-carrier protein]-C-terminal Gly-Gly-AMP + S-sulfanyl-L-cysteinyl-[cysteine desulfurase] + AH2 = [ThiS sulfur-carrier protein]-C-terminal-Gly-aminoethanethioate + L-cysteinyl-[cysteine desulfurase] + A + AMP + 2 H(+). Its pathway is cofactor biosynthesis; thiamine diphosphate biosynthesis. In terms of biological role, catalyzes the ATP-dependent transfer of a sulfur to tRNA to produce 4-thiouridine in position 8 of tRNAs, which functions as a near-UV photosensor. Also catalyzes the transfer of sulfur to the sulfur carrier protein ThiS, forming ThiS-thiocarboxylate. This is a step in the synthesis of thiazole, in the thiamine biosynthesis pathway. The sulfur is donated as persulfide by IscS. The polypeptide is Probable tRNA sulfurtransferase (Clostridium botulinum (strain Alaska E43 / Type E3)).